The chain runs to 91 residues: Small ribosomal subunit protein bS18 (91 aa).

Belongs to the bacterial ribosomal protein bS18 family. Part of the 30S ribosomal subunit. Forms a tight heterodimer with protein bS6.

Functionally, binds as a heterodimer with protein bS6 to the central domain of the 16S rRNA, where it helps stabilize the platform of the 30S subunit. This is Small ribosomal subunit protein bS18 from Paraburkholderia phymatum (strain DSM 17167 / CIP 108236 / LMG 21445 / STM815) (Burkholderia phymatum).